The chain runs to 292 residues: Probable alpha-L-glutamate ligase (292 aa).

Positions 104–287 (HQLLAAKGID…VATRIIEHVE (184 aa)) constitute an ATP-grasp domain. Residues Lys-141, 178–179 (EF), Asp-187, and 211–213 (RSN) each bind ATP. Mg(2+) is bound by residues Asp-248, Glu-260, and Asn-262. Positions 248, 260, and 262 each coordinate Mn(2+).

This sequence belongs to the RimK family. The cofactor is Mg(2+). Mn(2+) is required as a cofactor.

This is Probable alpha-L-glutamate ligase from Stenotrophomonas maltophilia (strain R551-3).